The following is a 564-amino-acid chain: Multidrug resistance protein 1 (564 aa).

The Cytoplasmic portion of the chain corresponds to 1–115; that stretch reads MHYRFLRDSF…NPQNWPTLQK (115 aa). Positions 60–101 are disordered; that stretch reads IDNQGEPNSSQSSSSNNTIVDNNNNNDNDVDGDKIVVTWDGD. Low complexity predominate over residues 67-86; the sequence is NSSQSSSSNNTIVDNNNNND. Residues 116-136 traverse the membrane as a helical segment; sequence AFFIFQISFLTTSVYMGSAVY. Topologically, residues 137-151 are extracellular; it reads TPGIEELMHDFGIGR. The helical transmembrane segment at 152 to 172 threads the bilayer; sequence VVATLPLTLFVIGYGVGPLVF. Topologically, residues 173–183 are cytoplasmic; the sequence is SPMSENAIFGR. A helical membrane pass occupies residues 184-204; it reads TSIYIITLFLFVILQIPTALV. Residues 205–206 lie on the Extracellular side of the membrane; that stretch reads NN. Residues 207-227 form a helical membrane-spanning segment; the sequence is IAGLCILRFLGGFFASPCLAT. The Cytoplasmic portion of the chain corresponds to 228 to 242; sequence GGASVADVVKFWNLP. The helical transmembrane segment at 243–263 threads the bilayer; sequence VGLAAWSLGAVCGPSFGPFFG. Over 264-273 the chain is Extracellular; that stretch reads SILTVKASWR. The chain crosses the membrane as a helical span at residues 274-294; the sequence is WTFWFMCIISGFSFVMLCFTL. Topologically, residues 295–350 are cytoplasmic; that stretch reads PETFGKTLLYRKAKRLRAITGNDRITSEGEVENSKMTSHELIIDTLWRPLEITVME. Residues 351-371 form a helical membrane-spanning segment; it reads PVVLLINIYIAMVYSILYLFF. Over 372 to 390 the chain is Extracellular; it reads EVFPIYFVGVKHFTLVELG. A helical membrane pass occupies residues 391–411; sequence TTYMSIVIGIVIAAFIYIPVI. Topologically, residues 412-428 are cytoplasmic; that stretch reads RQKFTKPILRQEQVFPE. Residues 429-449 form a helical membrane-spanning segment; that stretch reads VFIPIAIVGGILLTSGLFIFG. Topologically, residues 450–455 are extracellular; that stretch reads WSANRT. N-linked (GlcNAc...) asparagine glycosylation occurs at Asn-453. Residues 456-476 traverse the membrane as a helical segment; that stretch reads THWVGPLFGAATTASGAFLIF. At 477–503 the chain is on the cytoplasmic side; the sequence is QTLFNFMGASFKPHYIASVFASNDLFR. A helical membrane pass occupies residues 504-524; the sequence is SVIASVFPLFGAPLFDNLATP. The Extracellular portion of the chain corresponds to 525–528; it reads EYPV. Residues 529-549 traverse the membrane as a helical segment; sequence AWGSSVLGFITLVMIAIPVLF. The Cytoplasmic portion of the chain corresponds to 550–564; the sequence is YLNGPKLRARSKYAN.

It belongs to the major facilitator superfamily. CAR1 family.

The protein resides in the cell membrane. Plasma membrane multidrug efflux pump that confers resistance to numerous chemicals including azoles such as fluconazole, voriconazole, and benztriazoles, as well as to benomyl, cycloheximide, methotrexate, 4-nitroquinoline-N-oxide, sulfometuron methyl, cerulenin, and brefeldin A. This chain is Multidrug resistance protein 1, found in Candida albicans (strain SC5314 / ATCC MYA-2876) (Yeast).